We begin with the raw amino-acid sequence, 456 residues long: Maturase-like protein 1 (456 aa).

This sequence to group II intron maturases.

Its subcellular location is the plastid. In terms of biological role, could be required for group III intron excision. The polypeptide is Maturase-like protein 1 (mat1) (Euglena longa (Euglenophycean alga)).